The chain runs to 271 residues: uncharacterized protein (271 aa).

The disordered stretch occupies residues 1-202 (MLNSPGTRRP…APSSALSHQG (202 aa)). Over residues 10 to 23 (PVKEAQKYGEDSQK) the composition is skewed to basic and acidic residues. Low complexity-rich tracts occupy residues 33–50 (RSSVTTLSASALSDSSSP) and 59–73 (GRPSTPARAPATSAP). A compositionally biased stretch (polar residues) spans 92 to 101 (TRSSANQLPQ). The segment covering 121–142 (LRRRSHGDRCVPRSRRRPRPRP) has biased composition (basic residues).

This is an uncharacterized protein from Homo sapiens (Human).